The sequence spans 176 residues: Probable DNA-directed RNA polymerase subunit delta (176 aa).

The 68-residue stretch at 14 to 81 folds into the HTH HARE-type domain; the sequence is CSMIEVVHSV…GENRWGLRSW (68 aa). The disordered stretch occupies residues 90–176; the sequence is EILPQPKPKK…ETEEEEEEEL (87 aa). Residues 106–176 show a composition bias toward acidic residues; it reads DGFDDYIEED…ETEEEEEEEL (71 aa).

The protein belongs to the RpoE family. As to quaternary structure, RNAP is composed of a core of 2 alpha, a beta and a beta' subunits. The core is associated with a delta subunit and one of several sigma factors.

Its function is as follows. Participates in both the initiation and recycling phases of transcription. In the presence of the delta subunit, RNAP displays an increased specificity of transcription, a decreased affinity for nucleic acids, and an increased efficiency of RNA synthesis because of enhanced recycling. The protein is Probable DNA-directed RNA polymerase subunit delta of Bacillus thuringiensis subsp. konkukian (strain 97-27).